The chain runs to 387 residues: Chlorophyll synthase, chloroplastic (387 aa).

Residues 1–57 (MTSILNTVSTIHSSRVTSVDRVGVLSLRNSDSVEFTRRRSGFSTLIYESPGRRFVVR) constitute a chloroplast transit peptide. A disordered region spans residues 62–81 (DTDKVKSQTPDKAPAGGSSI). The next 7 membrane-spanning stretches (helical) occupy residues 182–202 (VITQVWVLLLGGLGIAGILDV), 210–230 (TVFYLALGGSLLSYIYSAPPL), 241–261 (FALGASYISLPWWAGQALFGT), 266–286 (VVVLTLLYSIAGLGIAIVNDF), 311–331 (WICVGAIDITQLSVAGYLLAS), 336–356 (YALALVALIIPQIVFQFKYFL), and 364–384 (VKYQASAQPFLVLGIFVTALA).

It belongs to the UbiA prenyltransferase family. Chlorophyll synthase subfamily. Low level in flower buds, flowers, stems, leaves, greening cotyledons and immature siliques, but not in mature siliques or seeds.

It is found in the plastid. Its subcellular location is the chloroplast membrane. It carries out the reaction phytyl diphosphate + chlorophyllide a + H(+) = chlorophyll a + diphosphate. It functions in the pathway porphyrin-containing compound metabolism; chlorophyll biosynthesis. Involved in one of the last steps of the biosynthesis of chlorophyll a. Catalyzes the esterification of chlorophillide a or b with a preference for geranylgeranyldiphosphate (GGPP) rather than for phytyldiphosphate (PhyPP). In Arabidopsis thaliana (Mouse-ear cress), this protein is Chlorophyll synthase, chloroplastic (CHLG).